We begin with the raw amino-acid sequence, 120 residues long: Xibalbin-1 (120 aa).

The signal sequence occupies residues 1–21; that stretch reads MISKILIAACALLLISHLVLA. Residues 22–63 constitute a propeptide that is removed on maturation; it reads VPYLEDGLNSLHNRTGESDETRGYTIQLLKEMPEDDAVEDYS. 4 disulfides stabilise this stretch: Cys-79–Cys-94, Cys-86–Cys-99, Cys-93–Cys-110, and Cys-101–Cys-108.

Belongs to the xibalbin-1 family. Expressed by the venom gland. Not found in the whole body.

It localises to the secreted. In terms of biological role, probable neurotoxin. Strongly inhibits voltage-gated potassium channels (Kv1.1/KCNA1, Kv1.2/KCNA2, Kv1.3/KCNA3, and Kv1.6/KCNA6, with the highest toxicity against Kv1.6 (74% inhibition at 1 uM)) and mildly inhibits sodium channels (Nav1.2/SCN2A, Nav1.4/SCN4A, Nav1.5/SCN5A, Nav1.6/SCN8A, and BgNav). Induces activation of protein kinase A type II (PKA-II) and MAP kinase Erk1/2 in primary nociceptive and non-nociceptive sensory neurons. Does not show cytotoxic activity. Does not have an impact on Ca2+, cAMP, and NO signaling in the cell types analyzed. Does not interfere with the adhesion of leukocytes to endothelial cells. The chain is Xibalbin-1 from Xibalbanus tulumensis (Blind cave remipede).